The following is a 150-amino-acid chain: Large ribosomal subunit protein bL9 (150 aa).

This sequence belongs to the bacterial ribosomal protein bL9 family.

In terms of biological role, binds to the 23S rRNA. The polypeptide is Large ribosomal subunit protein bL9 (Neisseria meningitidis serogroup C (strain 053442)).